Reading from the N-terminus, the 355-residue chain is UPF0421 protein BALH_2468 (355 aa).

A run of 4 helical transmembrane segments spans residues 19–39 (IAVF…IFAV), 74–94 (FTFF…FTIV), 109–129 (TLTA…AFLI), and 131–151 (LATT…ILPP).

It belongs to the UPF0421 family.

It is found in the cell membrane. The sequence is that of UPF0421 protein BALH_2468 from Bacillus thuringiensis (strain Al Hakam).